Reading from the N-terminus, the 466-residue chain is Fez family zinc finger protein 1 (466 aa).

The short motif at 34–49 is the Engrailed homology 1 repressor element; the sequence is PLAFSIERIMSRTPEP. 6 consecutive C2H2-type zinc fingers follow at residues 261-283, 289-311, 317-339, 345-367, 373-395, and 401-424; these read FTCE…MPVH, FVCK…KIIH, HKCN…TRIH, FVCE…KLTH, FKCN…MHTH, and FTCP…RKLH. The segment at 446–466 is disordered; that stretch reads LPNREQSHTIIQSPQLQKSVY. Residues 453-466 show a composition bias toward polar residues; sequence HTIIQSPQLQKSVY.

This sequence belongs to the krueppel C2H2-type zinc-finger protein family.

It localises to the nucleus. In terms of biological role, transcription repressor. Involved in the development of the forebrain region. This chain is Fez family zinc finger protein 1 (fezf1), found in Xenopus laevis (African clawed frog).